The chain runs to 58 residues: Small ribosomal subunit protein bS21 (58 aa).

The interval 39 to 58 (DKPSVKKRAKSKAAAKYRSR) is disordered. Basic residues predominate over residues 43–58 (VKKRAKSKAAAKYRSR).

It belongs to the bacterial ribosomal protein bS21 family.

This Chlamydia abortus (strain DSM 27085 / S26/3) (Chlamydophila abortus) protein is Small ribosomal subunit protein bS21.